The following is a 343-amino-acid chain: tRNA N6-adenosine threonylcarbamoyltransferase (343 aa).

Residues histidine 115 and histidine 119 each coordinate Fe cation. Substrate-binding positions include leucine 138–alanine 142, aspartate 171, glycine 184, and asparagine 276. Aspartate 304 is a Fe cation binding site.

This sequence belongs to the KAE1 / TsaD family. Fe(2+) serves as cofactor.

It localises to the cytoplasm. It catalyses the reaction L-threonylcarbamoyladenylate + adenosine(37) in tRNA = N(6)-L-threonylcarbamoyladenosine(37) in tRNA + AMP + H(+). Required for the formation of a threonylcarbamoyl group on adenosine at position 37 (t(6)A37) in tRNAs that read codons beginning with adenine. Is involved in the transfer of the threonylcarbamoyl moiety of threonylcarbamoyl-AMP (TC-AMP) to the N6 group of A37, together with TsaE and TsaB. TsaD likely plays a direct catalytic role in this reaction. In Buchnera aphidicola subsp. Cinara cedri (strain Cc), this protein is tRNA N6-adenosine threonylcarbamoyltransferase.